Consider the following 231-residue polypeptide: tRNA (guanine-N(1)-)-methyltransferase (231 aa).

Residues G112 and 132–137 (IGDYIL) each bind S-adenosyl-L-methionine.

Belongs to the RNA methyltransferase TrmD family. Homodimer.

It is found in the cytoplasm. The enzyme catalyses guanosine(37) in tRNA + S-adenosyl-L-methionine = N(1)-methylguanosine(37) in tRNA + S-adenosyl-L-homocysteine + H(+). Specifically methylates guanosine-37 in various tRNAs. The polypeptide is tRNA (guanine-N(1)-)-methyltransferase (Sulfurimonas denitrificans (strain ATCC 33889 / DSM 1251) (Thiomicrospira denitrificans (strain ATCC 33889 / DSM 1251))).